The chain runs to 412 residues: Serine/threonine transporter SstT (412 aa).

Helical transmembrane passes span 16 to 36 (LVAQ…FLPG), 44 to 64 (LGDL…FVLV), 82 to 102 (IIVL…LASF), 115 to 135 (TDVI…FNIV), 141 to 161 (ALLN…GFAF), 179 to 199 (VTLI…GLVA), 217 to 237 (LLVL…LIVF), 298 to 318 (MGGA…TLGI), 330 to 350 (LLAA…LLLI), and 357 to 377 (FGIS…IGVV).

Belongs to the dicarboxylate/amino acid:cation symporter (DAACS) (TC 2.A.23) family.

The protein resides in the cell inner membrane. It catalyses the reaction L-serine(in) + Na(+)(in) = L-serine(out) + Na(+)(out). The catalysed reaction is L-threonine(in) + Na(+)(in) = L-threonine(out) + Na(+)(out). Its function is as follows. Involved in the import of serine and threonine into the cell, with the concomitant import of sodium (symport system). The chain is Serine/threonine transporter SstT from Stutzerimonas stutzeri (strain A1501) (Pseudomonas stutzeri).